We begin with the raw amino-acid sequence, 310 residues long: p-hydroxybenzoic acid efflux pump subunit AaeA (310 aa).

A helical membrane pass occupies residues 12–32 (AITVVLVILAFIAIFNAWVYY).

This sequence belongs to the membrane fusion protein (MFP) (TC 8.A.1) family.

It is found in the cell inner membrane. Functionally, forms an efflux pump with AaeB. The protein is p-hydroxybenzoic acid efflux pump subunit AaeA of Escherichia coli O127:H6 (strain E2348/69 / EPEC).